The primary structure comprises 92 residues: SPbeta prophage-derived uncharacterized protein YopY (92 aa).

In Bacillus subtilis (strain 168), this protein is SPbeta prophage-derived uncharacterized protein YopY (yopY).